Reading from the N-terminus, the 248-residue chain is Biosynthetic peptidoglycan transglycosylase (248 aa).

Residues 20 to 42 form a helical membrane-spanning segment; that stretch reads WLRWLMAAPLLFAAASVLQVLIL.

This sequence belongs to the glycosyltransferase 51 family.

Its subcellular location is the cell inner membrane. The catalysed reaction is [GlcNAc-(1-&gt;4)-Mur2Ac(oyl-L-Ala-gamma-D-Glu-L-Lys-D-Ala-D-Ala)](n)-di-trans,octa-cis-undecaprenyl diphosphate + beta-D-GlcNAc-(1-&gt;4)-Mur2Ac(oyl-L-Ala-gamma-D-Glu-L-Lys-D-Ala-D-Ala)-di-trans,octa-cis-undecaprenyl diphosphate = [GlcNAc-(1-&gt;4)-Mur2Ac(oyl-L-Ala-gamma-D-Glu-L-Lys-D-Ala-D-Ala)](n+1)-di-trans,octa-cis-undecaprenyl diphosphate + di-trans,octa-cis-undecaprenyl diphosphate + H(+). It functions in the pathway cell wall biogenesis; peptidoglycan biosynthesis. Peptidoglycan polymerase that catalyzes glycan chain elongation from lipid-linked precursors. In Xanthomonas euvesicatoria pv. vesicatoria (strain 85-10) (Xanthomonas campestris pv. vesicatoria), this protein is Biosynthetic peptidoglycan transglycosylase.